Reading from the N-terminus, the 321-residue chain is Pirin-like protein 2 (321 aa).

Residues histidine 88, histidine 90, histidine 132, and glutamate 134 each contribute to the Fe cation site.

The protein belongs to the pirin family. As to quaternary structure, interacts with RD21A, RD21B and XCP2.

It is found in the cytoplasm. Its subcellular location is the cytosol. It localises to the nucleus. Functionally, involved in susceptibility to the bacterial plant pathogen Ralstonia solanacearum. Stabilizes the xylem cysteine protease XCP2 by blocking its autolysis. This is Pirin-like protein 2 from Arabidopsis thaliana (Mouse-ear cress).